The sequence spans 590 residues: Neuronal PAS domain-containing protein 1 (590 aa).

The 54-residue stretch at 45–98 folds into the bHLH domain; the sequence is QRKEKSRNAARSRRGKENLEFFELAKLLPLPGAISSQLDKASIVRLSVTYLRLR. The PAS 1 domain occupies 135-207; that stretch reads EQHLGGHILQ…LGLRTPTPGP (73 aa). Residues 198–229 are disordered; sequence LGLRTPTPGPPTPPSVSSSSSSSSSLADTPEI. Residues 212-222 show a composition bias toward low complexity; that stretch reads SVSSSSSSSSS. In terms of domain architecture, PAS 2 spans 293-359; it reads APLAELPLHG…IRQSHVDLLD (67 aa). Positions 365–408 constitute a PAC domain; it reads TGYYRWLQRAGGFVWLQSVATVAGSGKSPGEHHVLWVSHVLSQA. The interval 425–494 is disordered; it reads ACEEASSPGP…SHPATPRPEF (70 aa). A compositionally biased stretch (pro residues) spans 433–442; it reads GPEPTEPEPP. Over residues 463-476 the composition is skewed to basic and acidic residues; it reads IKVEPGPRETKGSE.

In terms of assembly, efficient DNA binding requires dimerization with another bHLH protein. Interacts with ARNT; forms a heterodimer that binds core DNA sequence 5'-[AG]CGTG-3' within the hypoxia response element (HRE) leading to a transcriptional repressor on its target gene TH.

Its subcellular location is the nucleus. Its function is as follows. May control regulatory pathways relevant to schizophrenia and to psychotic illness. May play a role in late central nervous system development by modulating EPO expression in response to cellular oxygen level. Forms a heterodimer that binds core DNA sequence 5'-TACGTG-3' within the hypoxia response element (HRE) leading to transcriptional repression on its target gene TH. In Homo sapiens (Human), this protein is Neuronal PAS domain-containing protein 1 (NPAS1).